Reading from the N-terminus, the 357-residue chain is uncharacterized protein (357 aa).

9 consecutive transmembrane segments (helical) span residues 13–33 (PVTG…TYLV), 44–64 (IACT…CAVY), 72–92 (VSTF…TCFL), 148–168 (VLTY…FCFV), 181–201 (LPIS…SGFF), 203–223 (YLFI…LGIW), 266–286 (IALT…SALF), 293–313 (SISG…PFLI), and 327–347 (YWVL…VVLL).

It is found in the mitochondrion membrane. This is an uncharacterized protein from Schizosaccharomyces pombe (strain 972 / ATCC 24843) (Fission yeast).